Here is a 482-residue protein sequence, read N- to C-terminus: ADP-ribosylation factor GTPase-activating protein effector protein 1 (482 aa).

The segment at 116–156 (QHKSTHSHHINHQTHPIHSSSSNSNSNNRIPTKTDSSKQHT) is disordered. A compositionally biased stretch (basic residues) spans 118–127 (KSTHSHHINH). Over residues 134 to 143 (SSSSNSNSNN) the composition is skewed to low complexity. The region spanning 170-297 (DELLSIVRKI…FVIDSNQGRE (128 aa)) is the Arf-GAP domain. A C4-type zinc finger spans residues 186 to 210 (CCDCGSTATVEWVSINLLCILCIKC).

It localises to the cytoplasm. GTPase-activating protein (GAP) for the ADP ribosylation factors ARF1 and ARF2. May be involved in the endocytic pathway. The protein is ADP-ribosylation factor GTPase-activating protein effector protein 1 (AGE1) of Saccharomyces cerevisiae (strain ATCC 204508 / S288c) (Baker's yeast).